Reading from the N-terminus, the 431-residue chain is 3-phosphoshikimate 1-carboxyvinyltransferase (431 aa).

Residues Lys-22, Ser-23, and Arg-27 each coordinate 3-phosphoshikimate. Lys-22 lines the phosphoenolpyruvate pocket. Gly-94 and Arg-122 together coordinate phosphoenolpyruvate. Residues Ser-167, Gln-169, Asp-314, and Lys-341 each contribute to the 3-phosphoshikimate site. Gln-169 contacts phosphoenolpyruvate. The active-site Proton acceptor is the Asp-314. Phosphoenolpyruvate contacts are provided by Arg-345 and Arg-391.

The protein belongs to the EPSP synthase family. In terms of assembly, monomer.

The protein localises to the cytoplasm. The enzyme catalyses 3-phosphoshikimate + phosphoenolpyruvate = 5-O-(1-carboxyvinyl)-3-phosphoshikimate + phosphate. It participates in metabolic intermediate biosynthesis; chorismate biosynthesis; chorismate from D-erythrose 4-phosphate and phosphoenolpyruvate: step 6/7. Catalyzes the transfer of the enolpyruvyl moiety of phosphoenolpyruvate (PEP) to the 5-hydroxyl of shikimate-3-phosphate (S3P) to produce enolpyruvyl shikimate-3-phosphate and inorganic phosphate. The protein is 3-phosphoshikimate 1-carboxyvinyltransferase of Leuconostoc citreum (strain KM20).